Reading from the N-terminus, the 76-residue chain is Small ribosomal subunit protein bS18 (76 aa).

It belongs to the bacterial ribosomal protein bS18 family. As to quaternary structure, part of the 30S ribosomal subunit. Forms a tight heterodimer with protein bS6.

Binds as a heterodimer with protein bS6 to the central domain of the 16S rRNA, where it helps stabilize the platform of the 30S subunit. This chain is Small ribosomal subunit protein bS18, found in Neisseria gonorrhoeae (strain ATCC 700825 / FA 1090).